A 464-amino-acid chain; its full sequence is Vitamin D3 hydroxylase-associated protein (464 aa).

Active-site charge relay system residues include Lys150 and Ser225. Residue Ser249 is the Acyl-ester intermediate of the active site.

It belongs to the amidase family. In terms of tissue distribution, kidney.

It is found in the mitochondrion inner membrane. Functionally, may have a vitamin D3 hydroxylase regulatory function. The sequence is that of Vitamin D3 hydroxylase-associated protein from Gallus gallus (Chicken).